A 1216-amino-acid chain; its full sequence is ATP-dependent helicase/nuclease subunit A (1216 aa).

Residues 26 to 488 (QKKTAEQIEA…ILLKANFRSS (463 aa)) form the UvrD-like helicase ATP-binding domain. 47 to 54 (ASAGSGKT) contacts ATP. The region spanning 515–802 (KHQLVFANTK…ELMTIHKSKG (288 aa)) is the UvrD-like helicase C-terminal domain.

Belongs to the helicase family. AddA subfamily. Heterodimer of AddA and AddB/RexB. Requires Mg(2+) as cofactor.

The enzyme catalyses Couples ATP hydrolysis with the unwinding of duplex DNA by translocating in the 3'-5' direction.. The catalysed reaction is ATP + H2O = ADP + phosphate + H(+). Its function is as follows. The heterodimer acts as both an ATP-dependent DNA helicase and an ATP-dependent, dual-direction single-stranded exonuclease. Recognizes the chi site generating a DNA molecule suitable for the initiation of homologous recombination. The AddA nuclease domain is required for chi fragment generation; this subunit has the helicase and 3' -&gt; 5' nuclease activities. The polypeptide is ATP-dependent helicase/nuclease subunit A (Streptococcus pneumoniae (strain ATCC 700669 / Spain 23F-1)).